The chain runs to 84 residues: Cell division topological specificity factor (84 aa).

Belongs to the MinE family.

In terms of biological role, prevents the cell division inhibition by proteins MinC and MinD at internal division sites while permitting inhibition at polar sites. This ensures cell division at the proper site by restricting the formation of a division septum at the midpoint of the long axis of the cell. The polypeptide is Cell division topological specificity factor (Paraburkholderia phytofirmans (strain DSM 17436 / LMG 22146 / PsJN) (Burkholderia phytofirmans)).